The sequence spans 335 residues: Holliday junction branch migration complex subunit RuvB (335 aa).

Positions 4-183 are large ATPase domain (RuvB-L); the sequence is ADNLNVTSII…FGIVQRLEFY (180 aa). Residues arginine 23, glycine 64, lysine 67, threonine 68, threonine 69, 130–132, arginine 173, tyrosine 183, and arginine 220 contribute to the ATP site; that span reads EDY. Residue threonine 68 participates in Mg(2+) binding. The tract at residues 184 to 254 is small ATPAse domain (RuvB-S); that stretch reads PTKDLQNIIS…VAMNALNMLN (71 aa). The tract at residues 257–335 is head domain (RuvB-H); the sequence is TAGFNFMDRQ…HFSLKQSRDI (79 aa). Arginine 293, arginine 312, and arginine 317 together coordinate DNA.

The protein belongs to the RuvB family. As to quaternary structure, homohexamer. Forms an RuvA(8)-RuvB(12)-Holliday junction (HJ) complex. HJ DNA is sandwiched between 2 RuvA tetramers; dsDNA enters through RuvA and exits via RuvB. An RuvB hexamer assembles on each DNA strand where it exits the tetramer. Each RuvB hexamer is contacted by two RuvA subunits (via domain III) on 2 adjacent RuvB subunits; this complex drives branch migration. In the full resolvosome a probable DNA-RuvA(4)-RuvB(12)-RuvC(2) complex forms which resolves the HJ.

It is found in the cytoplasm. It catalyses the reaction ATP + H2O = ADP + phosphate + H(+). Functionally, the RuvA-RuvB-RuvC complex processes Holliday junction (HJ) DNA during genetic recombination and DNA repair, while the RuvA-RuvB complex plays an important role in the rescue of blocked DNA replication forks via replication fork reversal (RFR). RuvA specifically binds to HJ cruciform DNA, conferring on it an open structure. The RuvB hexamer acts as an ATP-dependent pump, pulling dsDNA into and through the RuvAB complex. RuvB forms 2 homohexamers on either side of HJ DNA bound by 1 or 2 RuvA tetramers; 4 subunits per hexamer contact DNA at a time. Coordinated motions by a converter formed by DNA-disengaged RuvB subunits stimulates ATP hydrolysis and nucleotide exchange. Immobilization of the converter enables RuvB to convert the ATP-contained energy into a lever motion, pulling 2 nucleotides of DNA out of the RuvA tetramer per ATP hydrolyzed, thus driving DNA branch migration. The RuvB motors rotate together with the DNA substrate, which together with the progressing nucleotide cycle form the mechanistic basis for DNA recombination by continuous HJ branch migration. Branch migration allows RuvC to scan DNA until it finds its consensus sequence, where it cleaves and resolves cruciform DNA. In Baumannia cicadellinicola subsp. Homalodisca coagulata, this protein is Holliday junction branch migration complex subunit RuvB.